Consider the following 621-residue polypeptide: Polycystin-2-like protein 2 (621 aa).

The Cytoplasmic portion of the chain corresponds to 1–31 (MSEATWWYRGGTSKHDLHYRREAEVNTTLEE). A helical membrane pass occupies residues 32-52 (LLLYFIFLINLCILTFGMVNP). Residues 53–277 (HMYYLNKVMS…SVKLLRYVSY (225 aa)) are Extracellular-facing. N-linked (GlcNAc...) asparagine glycosylation is found at Asn115 and Asn138. Residues 278–298 (YDYFIASCEVIFCIFLFVFII) form a helical membrane-spanning segment. Topologically, residues 299-314 (QELRKVNEFKSAYFRS) are cytoplasmic. The chain crosses the membrane as a helical span at residues 315–335 (VWNWLEMLLLLLCFLAVSFYA). Over 336–360 (YCNMQSFLLLGQLLKNTDSYPDFYF) the chain is Extracellular. Residues 361-381 (LAYWHIYYNNVIAITIFFAWI) form a helical membrane-spanning segment. At 382-406 (KIFKFISFNETMSQLSSTLSRCMKD) the chain is on the cytoplasmic side. A helical membrane pass occupies residues 407–427 (IVGFAIMFFIIFSAYAQLGFL). Topologically, residues 428–468 (VFGSQVDDFSTFQNSIFAQFRIVLGDFNFAGIQQANWILGP) are extracellular. Residues 469 to 489 (IYFITFIFFVFFVLLNMFLAI) traverse the membrane as a helical segment. The Cytoplasmic portion of the chain corresponds to 490 to 621 (INDTYSEVKA…KLNQLMRKLH (132 aa)). Residues 521–551 (NVLEKLRLKKAQAKEEKKMQTTDLAQRARRD) adopt a coiled-coil conformation.

Belongs to the polycystin family. In terms of assembly, interacts with TRPC1 and TRPC5. As to expression, expressed only in testis and heart.

The protein localises to the membrane. Exhibits a lower single conductance but no spontaneous channel activity. May function as a regulator of calcium channels or a channel component involving Ca2(+) homeostasis. This is Polycystin-2-like protein 2 from Mus musculus (Mouse).